Consider the following 338-residue polypeptide: Glyceraldehyde-3-phosphate dehydrogenase (338 aa).

Residues 11-12 (TI) and Gly111 contribute to the NAD(+) site. 140–142 (SCN) serves as a coordination point for D-glyceraldehyde 3-phosphate. Cys141 (nucleophile) is an active-site residue. Arg169 lines the NAD(+) pocket. Residue 195-196 (HG) coordinates D-glyceraldehyde 3-phosphate. Residue Gln302 coordinates NAD(+).

Belongs to the glyceraldehyde-3-phosphate dehydrogenase family. Homotetramer.

It localises to the cytoplasm. It catalyses the reaction D-glyceraldehyde 3-phosphate + phosphate + NADP(+) = (2R)-3-phospho-glyceroyl phosphate + NADPH + H(+). The enzyme catalyses D-glyceraldehyde 3-phosphate + phosphate + NAD(+) = (2R)-3-phospho-glyceroyl phosphate + NADH + H(+). It participates in carbohydrate degradation; glycolysis; pyruvate from D-glyceraldehyde 3-phosphate: step 1/5. The chain is Glyceraldehyde-3-phosphate dehydrogenase (gap) from Methanobacterium formicicum.